The sequence spans 391 residues: Succinyl-diaminopimelate desuccinylase (391 aa).

Residue His-78 coordinates Zn(2+). Residue Asp-80 is part of the active site. Asp-111 provides a ligand contact to Zn(2+). The Proton acceptor role is filled by Glu-145. 3 residues coordinate Zn(2+): Glu-146, Glu-174, and His-360.

The protein belongs to the peptidase M20A family. DapE subfamily. As to quaternary structure, homodimer. Zn(2+) is required as a cofactor. The cofactor is Co(2+).

The catalysed reaction is N-succinyl-(2S,6S)-2,6-diaminopimelate + H2O = (2S,6S)-2,6-diaminopimelate + succinate. Its pathway is amino-acid biosynthesis; L-lysine biosynthesis via DAP pathway; LL-2,6-diaminopimelate from (S)-tetrahydrodipicolinate (succinylase route): step 3/3. Catalyzes the hydrolysis of N-succinyl-L,L-diaminopimelic acid (SDAP), forming succinate and LL-2,6-diaminopimelate (DAP), an intermediate involved in the bacterial biosynthesis of lysine and meso-diaminopimelic acid, an essential component of bacterial cell walls. The sequence is that of Succinyl-diaminopimelate desuccinylase from Albidiferax ferrireducens (strain ATCC BAA-621 / DSM 15236 / T118) (Rhodoferax ferrireducens).